A 142-amino-acid polypeptide reads, in one-letter code: Large ribosomal subunit protein uL11 (142 aa).

Belongs to the universal ribosomal protein uL11 family. Part of the ribosomal stalk of the 50S ribosomal subunit. Interacts with L10 and the large rRNA to form the base of the stalk. L10 forms an elongated spine to which L12 dimers bind in a sequential fashion forming a multimeric L10(L12)X complex. One or more lysine residues are methylated.

Functionally, forms part of the ribosomal stalk which helps the ribosome interact with GTP-bound translation factors. This is Large ribosomal subunit protein uL11 from Haemophilus ducreyi (strain 35000HP / ATCC 700724).